The sequence spans 620 residues: Chaperone protein HscA homolog (620 aa).

The protein belongs to the heat shock protein 70 family.

Its function is as follows. Chaperone involved in the maturation of iron-sulfur cluster-containing proteins. Has a low intrinsic ATPase activity which is markedly stimulated by HscB. The polypeptide is Chaperone protein HscA homolog (Shewanella loihica (strain ATCC BAA-1088 / PV-4)).